The following is a 352-amino-acid chain: 3-isopropylmalate dehydrogenase (352 aa).

Residues arginine 96, arginine 106, arginine 134, and aspartate 220 each contribute to the substrate site. 3 residues coordinate Mg(2+): aspartate 220, aspartate 244, and aspartate 248. 277 to 289 lines the NAD(+) pocket; that stretch reads GSAPDIAGKNLAN.

This sequence belongs to the isocitrate and isopropylmalate dehydrogenases family. LeuB type 1 subfamily. As to quaternary structure, homodimer. Requires Mg(2+) as cofactor. Mn(2+) serves as cofactor.

The protein localises to the cytoplasm. It catalyses the reaction (2R,3S)-3-isopropylmalate + NAD(+) = 4-methyl-2-oxopentanoate + CO2 + NADH. The protein operates within amino-acid biosynthesis; L-leucine biosynthesis; L-leucine from 3-methyl-2-oxobutanoate: step 3/4. In terms of biological role, catalyzes the oxidation of 3-carboxy-2-hydroxy-4-methylpentanoate (3-isopropylmalate) to 3-carboxy-4-methyl-2-oxopentanoate. The product decarboxylates to 4-methyl-2 oxopentanoate. The sequence is that of 3-isopropylmalate dehydrogenase from Desulfitobacterium hafniense (strain Y51).